The primary structure comprises 101 residues: Phosphoribosyl-AMP cyclohydrolase (101 aa).

Asp71 serves as a coordination point for Mg(2+). Cys72 serves as a coordination point for Zn(2+). Mg(2+) is bound by residues Asp73 and Asp75. The Zn(2+) site is built by Cys88 and Cys95.

It belongs to the PRA-CH family. In terms of assembly, homodimer. Mg(2+) is required as a cofactor. It depends on Zn(2+) as a cofactor.

The protein localises to the cytoplasm. The enzyme catalyses 1-(5-phospho-beta-D-ribosyl)-5'-AMP + H2O = 1-(5-phospho-beta-D-ribosyl)-5-[(5-phospho-beta-D-ribosylamino)methylideneamino]imidazole-4-carboxamide. It participates in amino-acid biosynthesis; L-histidine biosynthesis; L-histidine from 5-phospho-alpha-D-ribose 1-diphosphate: step 3/9. Functionally, catalyzes the hydrolysis of the adenine ring of phosphoribosyl-AMP. This is Phosphoribosyl-AMP cyclohydrolase from Bacillus cereus (strain ATCC 14579 / DSM 31 / CCUG 7414 / JCM 2152 / NBRC 15305 / NCIMB 9373 / NCTC 2599 / NRRL B-3711).